The chain runs to 518 residues: Protein nucleotidyltransferase YdiU (518 aa).

Residues 1–10 (MTHLQFDNRL) show a composition bias toward basic and acidic residues. A disordered region spans residues 1–23 (MTHLQFDNRLRAQLPGDPEQGPR). Residues glycine 100, glycine 102, arginine 103, lysine 123, aspartate 135, glycine 136, arginine 193, and arginine 200 each contribute to the ATP site. Aspartate 270 functions as the Proton acceptor in the catalytic mechanism. Positions 271 and 280 each coordinate Mg(2+). Residue aspartate 280 participates in ATP binding.

It belongs to the SELO family. Requires Mg(2+) as cofactor. The cofactor is Mn(2+).

The enzyme catalyses L-seryl-[protein] + ATP = 3-O-(5'-adenylyl)-L-seryl-[protein] + diphosphate. The catalysed reaction is L-threonyl-[protein] + ATP = 3-O-(5'-adenylyl)-L-threonyl-[protein] + diphosphate. It carries out the reaction L-tyrosyl-[protein] + ATP = O-(5'-adenylyl)-L-tyrosyl-[protein] + diphosphate. It catalyses the reaction L-histidyl-[protein] + UTP = N(tele)-(5'-uridylyl)-L-histidyl-[protein] + diphosphate. The enzyme catalyses L-seryl-[protein] + UTP = O-(5'-uridylyl)-L-seryl-[protein] + diphosphate. The catalysed reaction is L-tyrosyl-[protein] + UTP = O-(5'-uridylyl)-L-tyrosyl-[protein] + diphosphate. Functionally, nucleotidyltransferase involved in the post-translational modification of proteins. It can catalyze the addition of adenosine monophosphate (AMP) or uridine monophosphate (UMP) to a protein, resulting in modifications known as AMPylation and UMPylation. In Xanthomonas campestris pv. campestris (strain B100), this protein is Protein nucleotidyltransferase YdiU.